Consider the following 82-residue polypeptide: NAD(P)H-quinone oxidoreductase subunit O (82 aa).

Belongs to the complex I NdhO subunit family. In terms of assembly, NDH-1 can be composed of about 15 different subunits; different subcomplexes with different compositions have been identified which probably have different functions.

Its subcellular location is the cellular thylakoid membrane. The enzyme catalyses a plastoquinone + NADH + (n+1) H(+)(in) = a plastoquinol + NAD(+) + n H(+)(out). It catalyses the reaction a plastoquinone + NADPH + (n+1) H(+)(in) = a plastoquinol + NADP(+) + n H(+)(out). NDH-1 shuttles electrons from an unknown electron donor, via FMN and iron-sulfur (Fe-S) centers, to quinones in the respiratory and/or the photosynthetic chain. The immediate electron acceptor for the enzyme in this species is believed to be plastoquinone. Couples the redox reaction to proton translocation, and thus conserves the redox energy in a proton gradient. Cyanobacterial NDH-1 also plays a role in inorganic carbon-concentration. In Prochlorococcus marinus (strain MIT 9211), this protein is NAD(P)H-quinone oxidoreductase subunit O.